We begin with the raw amino-acid sequence, 238 residues long: MGQKVNPHGLRVGIIKDWDTKWYANKRDFGDLLVEDNEIRKFVKKKLFLSGVSRIEIERAANNKVKVNVHTAKPGMVIGKGGQGVEDLRKDIEKISKKNVAVNVIEVKRPETDAQLVAENVAFQLERRVSFRRAMKQVMQRAMKSGAKGIKVATSGRLGGAEMARTEGYSQGNVPLQTLRADINYGFAEADTTYGKLGIKVWIYKGEVLPTKGRVASNNEEVVGNVEKNTRGKKREAK.

The KH type-2 domain occupies 39 to 108; the sequence is IRKFVKKKLF…NVAVNVIEVK (70 aa).

The protein belongs to the universal ribosomal protein uS3 family. Part of the 30S ribosomal subunit. Forms a tight complex with proteins S10 and S14.

Binds the lower part of the 30S subunit head. Binds mRNA in the 70S ribosome, positioning it for translation. The chain is Small ribosomal subunit protein uS3 from Alkaliphilus oremlandii (strain OhILAs) (Clostridium oremlandii (strain OhILAs)).